The following is a 345-amino-acid chain: MFTSTGSSGLYKAPLSKSLLLVPSALSLLLTLLLPHCQKFFVYDLHAVKHDLQIWRLICGRIICLDLKDAFCSGLLIYNFRIFERRYGSRKFASFLLGSWVLSALFDFILVEAVQYSLGVTVASNLPSGFLAPVFALFVPFHCSIPRVQVAQILGPLSITNKTLIYILGLQLFTSGSYIWIVAMSGLISGMCYDRKVLQVHQVLRIPGRMAEFFSWALEPIFSSSEPTSEARVGMGATVDIQRQQRMEQLDRQLMLSQFAQVRRQRQQQGGMINWNRLFPPLRQRRNINYQDGPRSEQRASPPLEVSEEQVARLMEMGFSRGDALEALRASNNDLNVATNFLLQH.

Residues 1–39 form the signal peptide; sequence MFTSTGSSGLYKAPLSKSLLLVPSALSLLLTLLLPHCQK. Residues 40 to 91 lie on the Extracellular side of the membrane; that stretch reads FFVYDLHAVKHDLQIWRLICGRIICLDLKDAFCSGLLIYNFRIFERRYGSRK. The helical transmembrane segment at 92–112 threads the bilayer; sequence FASFLLGSWVLSALFDFILVE. Residues 113–125 are Cytoplasmic-facing; it reads AVQYSLGVTVASN. Residues 126–146 form a helical membrane-spanning segment; it reads LPSGFLAPVFALFVPFHCSIP. Topologically, residues 147 to 163 are extracellular; it reads RVQVAQILGPLSITNKT. Residue asparagine 161 is glycosylated (N-linked (GlcNAc...) asparagine). The chain crosses the membrane as a helical span at residues 164–184; it reads LIYILGLQLFTSGSYIWIVAM. The Cytoplasmic portion of the chain corresponds to 185–345; sequence SGLISGMCYD…NVATNFLLQH (161 aa). Residues 287–306 form a disordered region; that stretch reads NINYQDGPRSEQRASPPLEV. The region spanning 305 to 345 is the UBA domain; that stretch reads EVSEEQVARLMEMGFSRGDALEALRASNNDLNVATNFLLQH.

As to quaternary structure, interacts with LMBR1L, FAF2, AMFR and VCP.

Its subcellular location is the endoplasmic reticulum membrane. In terms of biological role, restricts trafficking of FAF2 from the endoplasmic reticulum to lipid droplets. In association with LMBR1L and E3 ubiquitin-protein ligase AMFR, negatively regulates the canonical Wnt signaling pathway in the lymphocytes by promoting the ubiquitin-mediated degradation of CTNNB1 and Wnt receptors FZD6 and LRP6. This chain is Ubiquitin-associated domain-containing protein 2 (Ubac2), found in Mus musculus (Mouse).